We begin with the raw amino-acid sequence, 494 residues long: Nuclear distribution protein PAC1 (494 aa).

The region spanning 14-46 (QKNELDKSVLRYLNWNYKQTVRHEHAQDYESVR) is the LisH domain. Residues 90 to 123 (NSIVRLQKKIIELEQNTETLVSQIKDLNTQVSEL) are a coiled coil. WD repeat units follow at residues 153–192 (NVES…IPLA), 196–244 (SHTK…CKFQ), 251–292 (GHEH…SLKT), 295–334 (PHSQ…SVGT), 347–395 (HFIE…LMAH), 415–454 (GHLS…HVWE), and 457–492 (HTGF…SNVF).

The protein belongs to the WD repeat LIS1/nudF family. As to quaternary structure, self-associates. Interacts with NDL1 and dynein.

It localises to the cytoplasm. Its subcellular location is the cytoskeleton. It is found in the spindle pole. Positively regulates the activity of the minus-end directed microtubule motor protein dynein. Plays a central role in positioning the mitotic spindle at the bud neck during cell division. Targets cytoplasmic dynein to microtubule plus ends, thereby promoting dynein-mediated microtubule sliding along the bud cortex and consequently the movement of the mitotic spindle to the bud neck. This Saccharomyces cerevisiae (strain YJM789) (Baker's yeast) protein is Nuclear distribution protein PAC1.